The primary structure comprises 1045 residues: Putative sodium-coupled neutral amino acid transporter 10 (1045 aa).

The next 10 membrane-spanning stretches (helical) occupy residues Leu8–Phe28, Ile33–Phe53, Ser85–Gly105, Val117–Leu137, Phe150–Phe170, Ile226–Tyr246, Met269–Cys289, Ile320–Glu340, Ile342–Ile362, and Phe375–Thr395. Composition is skewed to basic and acidic residues over residues Lys412–Ile453, Pro460–Gln479, and Val503–Glu546. Disordered stretches follow at residues Lys412 to Pro584 and Glu606 to Gly658. Residues Asn564 to Asn573 show a composition bias toward polar residues. A compositionally biased stretch (basic and acidic residues) spans Pro627–Gly658.

The protein belongs to the amino acid/polyamine transporter 2 family.

It is found in the membrane. Functionally, putative sodium-dependent amino acid/proton antiporter. The sequence is that of Putative sodium-coupled neutral amino acid transporter 10 (slc38a10) from Xenopus laevis (African clawed frog).